Reading from the N-terminus, the 420-residue chain is UDP-N-acetyl-D-mannosamine dehydrogenase (420 aa).

5 residues coordinate NAD(+): tyrosine 13, isoleucine 14, aspartate 33, threonine 85, and threonine 126. The UDP-N-acetyl-alpha-D-mannosaminouronate site is built by arginine 160, valine 161, lysine 212, asparagine 216, arginine 219, histidine 250, arginine 252, and glycine 263. Residue lysine 212 is the Proton donor/acceptor of the active site. Cysteine 266 serves as the catalytic Nucleophile. Residues phenylalanine 330 and lysine 331 each coordinate UDP-N-acetyl-alpha-D-mannosaminouronate. NAD(+) is bound at residue arginine 338. Position 416 (lysine 416) interacts with UDP-N-acetyl-alpha-D-mannosaminouronate.

The protein belongs to the UDP-glucose/GDP-mannose dehydrogenase family. WecC subfamily. Homodimer.

The enzyme catalyses UDP-N-acetyl-alpha-D-mannosamine + 2 NAD(+) + H2O = UDP-N-acetyl-alpha-D-mannosaminouronate + 2 NADH + 3 H(+). Its pathway is bacterial outer membrane biogenesis; enterobacterial common antigen biosynthesis. Its function is as follows. Catalyzes the four-electron oxidation of UDP-N-acetyl-D-mannosamine (UDP-ManNAc), reducing NAD(+) and releasing UDP-N-acetylmannosaminuronic acid (UDP-ManNAcA). The protein is UDP-N-acetyl-D-mannosamine dehydrogenase of Shigella flexneri.